The following is a 161-amino-acid chain: Nucleotide-binding protein xcc-b100_3818 (161 aa).

It belongs to the YajQ family.

Nucleotide-binding protein. This is Nucleotide-binding protein xcc-b100_3818 from Xanthomonas campestris pv. campestris (strain B100).